A 510-amino-acid polypeptide reads, in one-letter code: Zinc metalloproteinase (510 aa).

The first 24 residues, 1–24, serve as a signal peptide directing secretion; that stretch reads MKSKLICIIMVIAFQAHFTMTVKA. Positions 25 to 200 are excised as a propeptide; it reads DSVGEEKLQN…ILKKQNMLSE (176 aa). Histidine 349 serves as a coordination point for Zn(2+). Glutamate 350 is an active-site residue. Zn(2+) contacts are provided by histidine 353 and glutamate 373. Histidine 437 functions as the Proton donor in the catalytic mechanism.

Belongs to the peptidase M4 family. It depends on Zn(2+) as a cofactor.

It is found in the secreted. Functionally, probably linked to the pathogenesis of listerial infection. This Listeria monocytogenes serovar 1/2a (strain ATCC BAA-679 / EGD-e) protein is Zinc metalloproteinase (mpl).